Reading from the N-terminus, the 262-residue chain is ELL-associated factor 2 (262 aa).

Residues 17–104 form a necessary for interaction with ELL region; that stretch reads LKLGESFEKQ…TGECRLEKLS (88 aa). The span at 124–144 shows a compositional bias: polar residues; the sequence is LEQQQQQMWNPPRTSNLVQHS. Disordered regions lie at residues 124-154 and 170-232; these read LEQQ…SPTS and MDQM…ADTT. Phosphoserine occurs at positions 146, 151, and 154. A compositionally biased stretch (low complexity) spans 174–192; the sequence is SSCDSSSDSRSSSSSSSED. The tract at residues 177 to 262 is necessary for transactivation activity; that stretch reads DSSSDSRSSS…LSESDSDSED (86 aa). Residues 248 to 262 are necessary for interaction with TCEA1 and transactivation activity; that stretch reads RSDLQLSESDSDSED.

It belongs to the EAF family. As to quaternary structure, component of the super elongation complex (SEC), at least composed of EAF1, EAF2, CDK9, MLLT3/AF9, AFF (AFF1 or AFF4), the P-TEFb complex and ELL (ELL, ELL2 or ELL3). Interacts with ELL, ELL2 and TCEA1.

Its subcellular location is the nucleus speckle. Acts as a transcriptional transactivator of ELL, ELL2 and TCEA1 elongation activities. Potent inducer of apoptosis in prostatic and non-prostatic cell lines. This chain is ELL-associated factor 2 (Eaf2), found in Rattus norvegicus (Rat).